The sequence spans 269 residues: Activator of basal transcription 1 (269 aa).

The interval 1–40 (MVKAGELVEQQKAAMEEEANAEAAEDQEEPEDTACSSSSK) is disordered. A coiled-coil region spans residues 5–29 (GELVEQQKAAMEEEANAEAAEDQEE). Residues 16–32 (EEEANAEAAEDQEEPED) show a composition bias toward acidic residues. Positions 48-145 (GIVYLGHVPP…RKRSPFRYDL (98 aa)) constitute an RRM domain. Residues 164-194 (AFERQVRRQRLRAEVAQAKRETDFYLRNVEQ) adopt a coiled-coil conformation. A disordered region spans residues 220–244 (EQEFRARKAARPGGRERARLANVED).

Belongs to the ESF2/ABP1 family. In terms of assembly, interacts with ESF1/ABTAP. Interacts with IGHMBP2. In terms of tissue distribution, ubiquitously expressed.

It is found in the nucleus. Its subcellular location is the nucleolus. In terms of biological role, could be a novel TATA-binding protein (TBP) which can function as a basal transcription activator. Can act as a regulator of basal transcription for class II genes. This Mus musculus (Mouse) protein is Activator of basal transcription 1 (Abt1).